A 482-amino-acid polypeptide reads, in one-letter code: MASAASVSSLADEVNCPICQGTLREPVTIDCGHNFCCVCLTRYLEIPCLDPGELPTCPLCKEPFRPGSFRPNWQLASVVENIERLKLGSQLGSEEEEDVCLEHREKVYYFCEDDEMQLCVVCREAWEHRHHTVRFLEDAAGPYREQIQKCLECLRKEGEEIQRIQLRENQRIQVLLTQVATKKQKVISEFAHLSQFLEEQQSVLLAQLERLDGDILKHRDEFDVLVAGEICRFNTLIEELEEKNQRPARDLLTDIRSTLIRCETRRCRKPEAVSPELGQRIRDFPQQALPLRREMKTFLEKLCFELDYEPAHISLDPQTSHPKLLLSEDNQQARFSYKWQNSPDNPQRFDRATCVLAHSGFTEGRHTWVVSVDLAHGGSCTVGVVSQDIRRKGELRMRPEEGVWAVRLAWGFVSALGSFPTRLALEEHPRQVRVSIDYEVGWVTFVNAVTQEPIYTFTASFTQKVFPFFGLWGRGSKFSLSS.

The RING-type zinc-finger motif lies at 16 to 61 (CPICQGTLREPVTIDCGHNFCCVCLTRYLEIPCLDPGELPTCPLCK). The segment at 95 to 136 (EEEDVCLEHREKVYYFCEDDEMQLCVVCREAWEHRHHTVRFL) adopts a B box-type zinc-finger fold. Zn(2+) contacts are provided by Cys100, His103, Cys122, and His128. The B30.2/SPRY domain occupies 293–482 (REMKTFLEKL…GRGSKFSLSS (190 aa)).

Belongs to the TRIM/RBCC family. In terms of assembly, interacts with IFNAR1; this interaction prevents association of IFNAR1 with TYK2.

It localises to the cytoplasm. E3 ligase that plays an essential role in the differentiation and survival of terminal erythroid cells. May directly bind to PTEN and promote its ubiquitination, resulting in its proteasomal degradation and activation of hypertrophic signaling. In addition, plays a role in immune response regulation by repressing the phosphorylation of STAT1 and STAT2 in the interferon/JAK/STAT signaling pathway independent of its E3 ligase activity. Mechanistically, interacts with the intracellular domain of IFNAR1 and thereby inhibits the association of TYK2 and IFNAR1. The protein is Tripartite motif-containing protein 10 (TRIM10) of Sus scrofa (Pig).